We begin with the raw amino-acid sequence, 45 residues long: Photosystem II reaction center protein K (45 aa).

Positions 1-8 are excised as a propeptide; the sequence is MTQIFLIG. The chain crosses the membrane as a helical span at residues 20–40; the sequence is IVDVLPIIPVLFLLLAFVWQA.

Belongs to the PsbK family. As to quaternary structure, PSII is composed of 1 copy each of membrane proteins PsbA, PsbB, PsbC, PsbD, PsbE, PsbF, PsbH, PsbI, PsbJ, PsbK, PsbL, PsbM, PsbT, PsbX, PsbY, PsbZ, Psb30/Ycf12, at least 3 peripheral proteins of the oxygen-evolving complex and a large number of cofactors. It forms dimeric complexes.

It is found in the plastid. It localises to the chloroplast thylakoid membrane. In terms of biological role, one of the components of the core complex of photosystem II (PSII). PSII is a light-driven water:plastoquinone oxidoreductase that uses light energy to abstract electrons from H(2)O, generating O(2) and a proton gradient subsequently used for ATP formation. It consists of a core antenna complex that captures photons, and an electron transfer chain that converts photonic excitation into a charge separation. This is Photosystem II reaction center protein K from Ostreococcus tauri.